The primary structure comprises 462 residues: Alkaline phosphatase 3 (462 aa).

The first 32 residues, 1-32 (MKKFPKKLLPIAVLSSIAFSSLASGSVPEASA), serve as a signal peptide directing secretion. Asp52 provides a ligand contact to Mg(2+). Asp52 contributes to the Zn(2+) binding site. Ser101 functions as the Phosphoserine intermediate in the catalytic mechanism. Thr154 and Glu275 together coordinate Mg(2+). Zn(2+) is bound by residues Asp280, His284, Asp322, His323, and His419.

It belongs to the alkaline phosphatase family. In terms of assembly, monomer. Mg(2+) is required as a cofactor. Requires Zn(2+) as cofactor.

The enzyme catalyses a phosphate monoester + H2O = an alcohol + phosphate. This Bacillus subtilis (strain 168) protein is Alkaline phosphatase 3 (phoB).